The following is a 437-amino-acid chain: ATP-dependent protease ATPase subunit HslU (437 aa).

ATP contacts are provided by residues valine 18, 60–65 (GVGKTE), aspartate 249, glutamate 315, and arginine 387.

This sequence belongs to the ClpX chaperone family. HslU subfamily. As to quaternary structure, a double ring-shaped homohexamer of HslV is capped on each side by a ring-shaped HslU homohexamer. The assembly of the HslU/HslV complex is dependent on binding of ATP.

The protein localises to the cytoplasm. Functionally, ATPase subunit of a proteasome-like degradation complex; this subunit has chaperone activity. The binding of ATP and its subsequent hydrolysis by HslU are essential for unfolding of protein substrates subsequently hydrolyzed by HslV. HslU recognizes the N-terminal part of its protein substrates and unfolds these before they are guided to HslV for hydrolysis. The protein is ATP-dependent protease ATPase subunit HslU of Rhodospirillum centenum (strain ATCC 51521 / SW).